Reading from the N-terminus, the 946-residue chain is Translation initiation factor IF-2 (946 aa).

Disordered regions lie at residues 58 to 250 (AERK…AVVI) and 301 to 324 (VSRDKRRGRQPGRPISEEQAKSLS). 2 stretches are compositionally biased toward low complexity: residues 102 to 165 (EPPQ…QPAA) and 174 to 185 (AQPSAPQPAAAQ). Positions 186–211 (PRPPQPPMPSRPPPAGYRPAPPPGAR) are enriched in pro residues. Residues 212–229 (PPMSAAPGAPAQPGAAAQ) are compositionally biased toward low complexity. Positions 445 to 614 (IRPPVVTVMG…ALQSEVLELK (170 aa)) constitute a tr-type G domain. A G1 region spans residues 454 to 461 (GHVDHGKT). Residue 454-461 (GHVDHGKT) participates in GTP binding. Positions 479–483 (GITQH) are G2. A G3 region spans residues 500–503 (DTPG). GTP-binding positions include 500-504 (DTPGH) and 554-557 (NKVD). The tract at residues 554–557 (NKVD) is G4. The interval 590 to 592 (SAR) is G5.

Belongs to the TRAFAC class translation factor GTPase superfamily. Classic translation factor GTPase family. IF-2 subfamily.

The protein resides in the cytoplasm. One of the essential components for the initiation of protein synthesis. Protects formylmethionyl-tRNA from spontaneous hydrolysis and promotes its binding to the 30S ribosomal subunits. Also involved in the hydrolysis of GTP during the formation of the 70S ribosomal complex. The protein is Translation initiation factor IF-2 of Anaeromyxobacter sp. (strain K).